The following is a 289-amino-acid chain: Xyloglucan endotransglucosylase/hydrolase protein 15 (289 aa).

The N-terminal stretch at 1–25 (MGPSSSLTTIVATVLLVTLFGSAYA) is a signal peptide. The GH16 domain occupies 26–216 (SNFFDEFDLT…WSKAPFTAYY (191 aa)). Catalysis depends on Glu102, which acts as the Nucleophile. The Proton donor role is filled by Glu106. Glu106 is a binding site for xyloglucan. The N-linked (GlcNAc...) asparagine glycan is linked to Asn110. Xyloglucan-binding positions include 119 to 121 (HTN), 129 to 131 (DRE), 195 to 196 (DW), and Gly200. Disulfide bonds link Cys224/Cys230 and Cys270/Cys284. Position 275 (Arg275) interacts with xyloglucan.

This sequence belongs to the glycosyl hydrolase 16 family. XTH group 2 subfamily. Contains at least one intrachain disulfide bond essential for its enzymatic activity. Strongly expressed in roots, hypocotyls and cotyledons. Aslo detected in inflorescence stems and in the carpels and styles in flowers.

It is found in the secreted. It localises to the cell wall. The protein resides in the extracellular space. The protein localises to the apoplast. The catalysed reaction is breaks a beta-(1-&gt;4) bond in the backbone of a xyloglucan and transfers the xyloglucanyl segment on to O-4 of the non-reducing terminal glucose residue of an acceptor, which can be a xyloglucan or an oligosaccharide of xyloglucan.. It catalyses the reaction xyloglucan + H2O = xyloglucan oligosaccharides.. Its function is as follows. Catalyzes xyloglucan endohydrolysis (XEH) and/or endotransglycosylation (XET). Cleaves and religates xyloglucan polymers, an essential constituent of the primary cell wall, and thereby participates in cell wall construction of growing tissues. Has a high XET activity, but little or no XEH activity in vitro. Acceptor preferences are XXXGol &gt; XLLGol = XLFGol &gt; XXLGol &gt; XXFGol. In Arabidopsis thaliana (Mouse-ear cress), this protein is Xyloglucan endotransglucosylase/hydrolase protein 15.